We begin with the raw amino-acid sequence, 496 residues long: MGKVAVGATVVCTAAVCAVAVLVVRRRMQSSGKWGRVLAILKAFEEDCATPISKLRQVADAMTVEMHAGLASDGGSKLKMLISYVDNLPSGDEKGLFYALDLGGTNFRVMRVLLGGKQERVVKQEFEEVSIPPHLMTGGSDELFNFIAEALAKFVATECEDFHLPEGRQRELGFTFSFPVKQTSLSSGSLIKWTKGFSIEEAVGQDVVGALNKALERVGLDMRIAALVNDTVGTLAGGRYYNPDVVAAVILGTGTNAAYVERATAIPKWHGLLPKSGEMVINMEWGNFRSSHLPLTEFDHTLDFESLNPGEQILEKIISGMYLGEILRRVLLKMAEDAAFFGDTVPSKLRIPFIIRTPHMSAMHNDTSPDLKIVGSKIKDILEVPTTSLKMRKVVISLCNIIATRGARLSAAGIYGILKKLGRDTTKDEEVQKSVIAMDGGLFEHYTQFSECMESSLKELLGDEASGSVEVTHSNDGSGIGAALLAASHSLYLEDS.

A helical membrane pass occupies residues 4–24; it reads VAVGATVVCTAAVCAVAVLVV. The region spanning 35 to 487 is the Hexokinase domain; sequence GRVLAILKAF…SGIGAALLAA (453 aa). Residues 90–228 are hexokinase small subdomain; it reads SGDEKGLFYA…GLDMRIAALV (139 aa). ADP-binding residues include Gly104, Thr105, and Asn106. Residues Thr194, Lys195, Asn229, and Asp230 each contribute to the D-glucose site. Residues 229–476 are hexokinase large subdomain; that stretch reads NDTVGTLAGG…GSVEVTHSND (248 aa). Thr253 is an ADP binding site. Residues Asn256, Glu284, and Glu315 each coordinate D-glucose. Gly441 is an ADP binding site.

This sequence belongs to the hexokinase family. Interacts with RPT5B in nucleus. Interacts with RHIP1. Interacts with KING1 in mitochondria. Interacts with CLF (via SANT domain) and EZA1/SWN (via SANT domain) in nucleus. As to expression, highly expressed in flowers and siliques, at intermediate levels in roots and stems, and at lower levels in rosette and cauline leaves.

The protein localises to the mitochondrion outer membrane. The protein resides in the nucleus. It catalyses the reaction a D-hexose + ATP = a D-hexose 6-phosphate + ADP + H(+). The catalysed reaction is D-fructose + ATP = D-fructose 6-phosphate + ADP + H(+). The enzyme catalyses D-glucose + ATP = D-glucose 6-phosphate + ADP + H(+). It functions in the pathway carbohydrate metabolism; hexose metabolism. It participates in carbohydrate degradation; glycolysis; D-glyceraldehyde 3-phosphate and glycerone phosphate from D-glucose: step 1/4. Its function is as follows. Fructose and glucose phosphorylating enzyme. May be involved in the phosphorylation of glucose during the export from mitochondrion to cytosol. Acts as a sugar sensor which may regulate sugar-dependent gene repression or activation. Mediates the effects of sugar on plant growth and development independently of its catalytic activity or the sugar metabolism. May regulate the execution of program cell death in plant cells. Promotes roots and leaves growth. Together with sugar, is involved in the regulation of the expression of aquaporin genes, and reduces leaf water conductance, to coordinate sugar levels with the loss of water through transpiration. Regulates cell proliferation and expansion early during leaf development. Involved in sucrose-induced leaf growth stimulation independently of GPT2. May participate to the stimulation of hypocotyl elongation under long-day (LD) conditions. Forms a nuclear complex with CLF and EZA1/SWN to target common glucose-responsive genes and regulate glucose signaling. Is required for CLF- and EZA1/SWN-mediated histone H3 trimethylation on 'Lys-27' (H3K27me3) and glucose-mediated gene repression. In Arabidopsis thaliana (Mouse-ear cress), this protein is Hexokinase-1.